Consider the following 180-residue polypeptide: Cytidylate kinase (180 aa).

Residue 7–15 (GPPGSGKST) participates in ATP binding.

Belongs to the cytidylate kinase family. Type 2 subfamily.

It is found in the cytoplasm. The catalysed reaction is CMP + ATP = CDP + ADP. It catalyses the reaction dCMP + ATP = dCDP + ADP. This chain is Cytidylate kinase, found in Sulfurisphaera tokodaii (strain DSM 16993 / JCM 10545 / NBRC 100140 / 7) (Sulfolobus tokodaii).